A 375-amino-acid chain; its full sequence is 23S rRNA (uracil(747)-C(5))-methyltransferase RlmC (375 aa).

[4Fe-4S] cluster-binding residues include Cys3, Cys11, Cys14, and Cys87. Residues Gln212, Phe241, Glu262, and Asn307 each contribute to the S-adenosyl-L-methionine site. The active-site Nucleophile is Cys334.

The protein belongs to the class I-like SAM-binding methyltransferase superfamily. RNA M5U methyltransferase family. RlmC subfamily.

The enzyme catalyses uridine(747) in 23S rRNA + S-adenosyl-L-methionine = 5-methyluridine(747) in 23S rRNA + S-adenosyl-L-homocysteine + H(+). Functionally, catalyzes the formation of 5-methyl-uridine at position 747 (m5U747) in 23S rRNA. In Cronobacter sakazakii (strain ATCC BAA-894) (Enterobacter sakazakii), this protein is 23S rRNA (uracil(747)-C(5))-methyltransferase RlmC.